We begin with the raw amino-acid sequence, 806 residues long: DNA topoisomerase 1 (806 aa).

Residues 1 to 15 (MSVVSNHHSNGNGNS) show a composition bias toward low complexity. The segment at 1–236 (MSVVSNHHSN…KKEPPKKKVK (236 aa)) is disordered. The span at 24-34 (DEIKKEVKDEP) shows a compositional bias: basic and acidic residues. 2 stretches are compositionally biased toward basic residues: residues 49–60 (RDKKEKKQKKRK) and 98–108 (EKKKSKKNNKK). The span at 113–127 (SSEDDDEESEGDVSE) shows a compositional bias: acidic residues. The segment covering 128–137 (EDVKPQIHSD) has biased composition (basic and acidic residues). Residues 138–153 (DELEEEDEAPTTDDEE) show a composition bias toward acidic residues. The segment covering 159–176 (EKERRKKEKREKKERKEK) has biased composition (basic residues). The segment covering 177 to 188 (KRLEKENRKIKE) has biased composition (basic and acidic residues). The segment covering 189–199 (EDDEDSDDEDD) has biased composition (acidic residues). The span at 210-229 (KGAEKSKPSTSKKDAGGKKE) shows a compositional bias: basic and acidic residues. Interaction with DNA stretches follow at residues 467 to 468 (KY), 530 to 535 (RAGNEK), and 634 to 636 (TVK). The 330-residue stretch at 474 to 803 (SSKIKGEKDF…IDMTNSSDEE (330 aa)) folds into the Topo IB-type catalytic domain. Tyrosine 761 functions as the O-(3'-phospho-DNA)-tyrosine intermediate in the catalytic mechanism.

This sequence belongs to the type IB topoisomerase family. As to expression, expressed in male germ cells and in mature sperm.

The protein resides in the nucleus. It localises to the nucleolus. The protein localises to the chromosome. It carries out the reaction ATP-independent breakage of single-stranded DNA, followed by passage and rejoining.. Functionally, releases the supercoiling and torsional tension of DNA introduced during the DNA replication and transcription by transiently cleaving and rejoining one strand of the DNA duplex. Introduces a single-strand break via transesterification at a target site in duplex DNA. The scissile phosphodiester is attacked by the catalytic tyrosine of the enzyme, resulting in the formation of a DNA-(3'-phosphotyrosyl)-enzyme intermediate and the expulsion of a 5'-OH DNA strand. The free DNA strand then rotates around the intact phosphodiester bond on the opposing strand, thus removing DNA supercoils. Finally, in the religation step, the DNA 5'-OH attacks the covalent intermediate to expel the active-site tyrosine and restore the DNA phosphodiester backbone. Required for normal spermatogenesis and oogenesis. This chain is DNA topoisomerase 1 (top-1), found in Caenorhabditis elegans.